The chain runs to 243 residues: MKMHIARESIVFLLNKHLQNTILTKKIEQECFLQADTPKKYLQYIKPFLINCMTKNITTDLVMKDSKRLEPYIILEMRDIIQMMFFRTLQKHIFFKKNTDLCTEYAQKIEASCYHYTYQQQEKTFLEEYSTRCGTINHIINCEKKSHQQQDNDALNKLISGELKPEQLVGMTFAELCPSAALKEKTEITLRSQQKVAEKTSQLYKCPNCKQRMCTYREVQTRALDEPSTIFCTCKKCGHEFIG.

The 125-residue stretch at 77-201 folds into the TFIIS central domain; it reads MRDIIQMMFF…SQQKVAEKTS (125 aa). The TFIIS-type zinc-finger motif lies at 202–242; sequence QLYKCPNCKQRMCTYREVQTRALDEPSTIFCTCKKCGHEFI. Residues cysteine 206, cysteine 209, cysteine 234, and cysteine 237 each coordinate Zn(2+).

This sequence belongs to the TFS-II family.

Its function is as follows. Putative initiation factor. Necessary for efficient transcription elongation past template-encoded arresting sites. The protein is Transcription factor TFIIS homolog of Ornithodoros (relapsing fever ticks).